Consider the following 267-residue polypeptide: Orotidine 5'-phosphate decarboxylase (267 aa).

Substrate is bound by residues aspartate 40, 62–64, 93–102, tyrosine 215, and arginine 234; these read KTH and DRKFADIGNT. Lysine 95 functions as the Proton donor in the catalytic mechanism.

It belongs to the OMP decarboxylase family.

The enzyme catalyses orotidine 5'-phosphate + H(+) = UMP + CO2. Its pathway is pyrimidine metabolism; UMP biosynthesis via de novo pathway; UMP from orotate: step 2/2. The sequence is that of Orotidine 5'-phosphate decarboxylase (pyrG) from Phycomyces blakesleeanus (strain ATCC 8743b / DSM 1359 / FGSC 10004 / NBRC 33097 / NRRL 1555).